Reading from the N-terminus, the 463-residue chain is FAD-dependent monooxygenase ausM (463 aa).

FAD-binding residues include E40, G54, and R113. Y217 is an active-site residue. Residues D309 and A322 each coordinate FAD. The helical transmembrane segment at 443–463 (VPWLVISLPVLASVLCYLMFA) threads the bilayer.

It belongs to the paxM FAD-dependent monooxygenase family. The cofactor is FAD.

It localises to the membrane. Its pathway is secondary metabolite biosynthesis; terpenoid biosynthesis. FAD-dependent monooxygenase; part of the gene cluster that mediates the biosynthesis of calidodehydroaustin, a fungal meroterpenoid. The first step of the pathway is the synthesis of 3,5-dimethylorsellinic acid by the polyketide synthase ausA. 3,5-dimethylorsellinic acid is then prenylated by the polyprenyl transferase ausN. Further epoxidation by the FAD-dependent monooxygenase ausM and cyclization by the probable terpene cyclase ausL lead to the formation of protoaustinoid A. Protoaustinoid A is then oxidized to spiro-lactone preaustinoid A3 by the combined action of the FAD-binding monooxygenases ausB and ausC, and the dioxygenase ausE. Acid-catalyzed keto-rearrangement and ring contraction of the tetraketide portion of preaustinoid A3 by ausJ lead to the formation of preaustinoid A4. The aldo-keto reductase ausK, with the help of ausH, is involved in the next step by transforming preaustinoid A4 into isoaustinone which is in turn hydroxylated by the P450 monooxygenase ausI to form austinolide. The cytochrome P450 monooxygenase ausG modifies austinolide to austinol. Austinol is further acetylated to austin by the O-acetyltransferase ausP, which spontaneously changes to dehydroaustin. The cytochrome P450 monooxygenase ausR then converts dehydroaustin is into 7-dehydrodehydroaustin. The hydroxylation catalyzed by ausR permits the O-acetyltransferase ausQ to add an additional acetyl group to the molecule, leading to the formation of acetoxydehydroaustin. The short chain dehydrogenase ausT catalyzes the reduction of the double bond present between carbon atoms 1 and 2 to convert 7-dehydrodehydroaustin into 1,2-dihydro-7-hydroxydehydroaustin. AusQ catalyzes not only an acetylation reaction but also the addition of the PKS ausV diketide product to 1,2-dihydro-7-hydroxydehydroaustin, forming precalidodehydroaustin. Finally, the iron/alpha-ketoglutarate-dependent dioxygenase converts precalidodehydroaustin into calidodehydroaustin. The protein is FAD-dependent monooxygenase ausM of Aspergillus calidoustus.